Consider the following 98-residue polypeptide: MERILKPVFLAILIVLSFSSQCMGFGESCQAGKHIVPVGQQQIDSSTCTLYKCSNYNRKYALETTSCATLKMKSGCRMVPGAATAPFPNCCPMMMCKG.

The first 24 residues, 1–24 (MERILKPVFLAILIVLSFSSQCMG), serve as a signal peptide directing secretion. Lysine amide is present on Lys97.

This sequence belongs to the scorpion La1-like peptide family. Contains 4 disulfide bonds. In terms of tissue distribution, expressed by the venom gland.

It is found in the secreted. This is La1-like protein 13 from Urodacus yaschenkoi (Inland robust scorpion).